The following is an 89-amino-acid chain: Small ribosomal subunit protein uS15 (89 aa).

This sequence belongs to the universal ribosomal protein uS15 family. Part of the 30S ribosomal subunit. Forms a bridge to the 50S subunit in the 70S ribosome, contacting the 23S rRNA.

Functionally, one of the primary rRNA binding proteins, it binds directly to 16S rRNA where it helps nucleate assembly of the platform of the 30S subunit by binding and bridging several RNA helices of the 16S rRNA. In terms of biological role, forms an intersubunit bridge (bridge B4) with the 23S rRNA of the 50S subunit in the ribosome. The chain is Small ribosomal subunit protein uS15 from Bifidobacterium adolescentis (strain ATCC 15703 / DSM 20083 / NCTC 11814 / E194a).